Here is a 247-residue protein sequence, read N- to C-terminus: GTP cyclohydrolase 1 type 2 homolog (247 aa).

A divalent metal cation-binding residues include histidine 63, histidine 64, aspartate 101, histidine 215, and glutamate 219.

Belongs to the GTP cyclohydrolase I type 2/NIF3 family. As to quaternary structure, homohexamer.

This chain is GTP cyclohydrolase 1 type 2 homolog, found in Buchnera aphidicola subsp. Baizongia pistaciae (strain Bp).